Here is a 396-residue protein sequence, read N- to C-terminus: Ribosomal RNA large subunit methyltransferase I (396 aa).

The PUA domain occupies 2-79 (AIRIKLKPGR…REEEIDREFF (78 aa)).

It belongs to the methyltransferase superfamily. RlmI family.

The protein resides in the cytoplasm. It carries out the reaction cytidine(1962) in 23S rRNA + S-adenosyl-L-methionine = 5-methylcytidine(1962) in 23S rRNA + S-adenosyl-L-homocysteine + H(+). In terms of biological role, specifically methylates the cytosine at position 1962 (m5C1962) of 23S rRNA. The chain is Ribosomal RNA large subunit methyltransferase I from Shewanella oneidensis (strain ATCC 700550 / JCM 31522 / CIP 106686 / LMG 19005 / NCIMB 14063 / MR-1).